The chain runs to 353 residues: Putative transport protein aq_740 (353 aa).

8 helical membrane-spanning segments follow: residues L4–L24, F28–I48, F60–I80, V156–I176, V209–I229, L240–V260, L268–I288, and V309–L329.

It belongs to the autoinducer-2 exporter (AI-2E) (TC 2.A.86) family.

Its subcellular location is the cell membrane. The protein is Putative transport protein aq_740 of Aquifex aeolicus (strain VF5).